Consider the following 464-residue polypeptide: MGKRLLDKLWERHVVATNENGLDLLYIDLHLVHEVTSPQAFEGLRLTNRTVRRPDLTFATMDHNIPTKDVWNITDRIAKQQLDTLRENCKQFQVPLADIGDEEQGIVHVIGPELGLTQPGKTIVCGDSHTATHGAFGALAFGIGTSEVEHVLATQTLWQRKPKAMGIELKGKLPQGVYAKDIILHLLSKYGVAVGTGYVMEFYGEAIHAMDMEERMTLCNMAIEGGAKAGIIAPDEKTFAYVKGRKYAPKDYESIKKKWSELYTDLDVVYDLHILVDVTDLAPYVTWGTNPSMGVRIDEKLPEKHDANDERAFSYMGLSPGQSTYDIPVQHVFIGSCTNSRLSDLEIAASVVKGKKVKEGVRALVVPGSQRVREAAMHKGLHRIFEEAGFEWREPGCSMCLGMNPDQVPEGEHCASTSNRNFEGRQGKGARTHLVSPAMAAAAALYGHFVDIRKESYDGAISYS.

Residues C337, C397, and C400 each coordinate [4Fe-4S] cluster.

Belongs to the aconitase/IPM isomerase family. LeuC type 1 subfamily. In terms of assembly, heterodimer of LeuC and LeuD. The cofactor is [4Fe-4S] cluster.

It carries out the reaction (2R,3S)-3-isopropylmalate = (2S)-2-isopropylmalate. Its pathway is amino-acid biosynthesis; L-leucine biosynthesis; L-leucine from 3-methyl-2-oxobutanoate: step 2/4. In terms of biological role, catalyzes the isomerization between 2-isopropylmalate and 3-isopropylmalate, via the formation of 2-isopropylmaleate. This is 3-isopropylmalate dehydratase large subunit from Bacillus cereus (strain B4264).